A 790-amino-acid polypeptide reads, in one-letter code: Ribosome biogenesis protein ERB1 (790 aa).

The disordered stretch occupies residues 1-93 (MAKKNTVTGS…SDELQDDSNS (93 aa)). Over residues 20–89 (SPEVSESEEI…SEDFSDELQD (70 aa)) the composition is skewed to acidic residues. The interval 255-371 (RFVPSKHEAK…LRKVPAYQEN (117 aa)) is required for interaction with NOP7. The tract at residues 371 to 407 (NLRERFERSLDLYLAPRVRHNKLNIDPDSLIPDLPSP) is required for interaction with YTM1. WD repeat units follow at residues 423-462 (GHIG…QVYH), 470-510 (KDDD…YEIE), 574-616 (QCRK…SQSP), 619-657 (KSKG…LTKK), 660-699 (PGAR…TPYK), 703-743 (YHEK…DLMT), and 759-790 (VHSL…LWTT).

Belongs to the WD repeat BOP1/ERB1 family. Component of the NOP7 complex, composed of ERB1, NOP7 and YTM1. The complex is held together by ERB1, which interacts with NOP7 via its N-terminal domain and with YTM1 via a high-affinity interaction between the seven-bladed beta-propeller domains of the 2 proteins. The NOP7 complex associates with the 66S pre-ribosome.

Its subcellular location is the nucleus. It is found in the nucleolus. It localises to the nucleoplasm. In terms of biological role, component of the NOP7 complex, which is required for maturation of the 25S and 5.8S ribosomal RNAs and formation of the 60S ribosome. This is Ribosome biogenesis protein ERB1 from Meyerozyma guilliermondii (strain ATCC 6260 / CBS 566 / DSM 6381 / JCM 1539 / NBRC 10279 / NRRL Y-324) (Yeast).